Reading from the N-terminus, the 178-residue chain is uncharacterized protein (178 aa).

The first 19 residues, 1-19, serve as a signal peptide directing secretion; that stretch reads MKKLLIVTMLFTLALSAQA.

Belongs to the opacity porin family.

This is an uncharacterized protein from Haemophilus influenzae (strain ATCC 51907 / DSM 11121 / KW20 / Rd).